Consider the following 238-residue polypeptide: Ribonuclease PH (238 aa).

Residues Arg86 and 124–126 each bind phosphate; that span reads GTR.

This sequence belongs to the RNase PH family. As to quaternary structure, homohexameric ring arranged as a trimer of dimers.

The enzyme catalyses tRNA(n+1) + phosphate = tRNA(n) + a ribonucleoside 5'-diphosphate. Functionally, phosphorolytic 3'-5' exoribonuclease that plays an important role in tRNA 3'-end maturation. Removes nucleotide residues following the 3'-CCA terminus of tRNAs; can also add nucleotides to the ends of RNA molecules by using nucleoside diphosphates as substrates, but this may not be physiologically important. Probably plays a role in initiation of 16S rRNA degradation (leading to ribosome degradation) during starvation. The polypeptide is Ribonuclease PH (Geotalea daltonii (strain DSM 22248 / JCM 15807 / FRC-32) (Geobacter daltonii)).